A 708-amino-acid chain; its full sequence is RUN and FYVE domain-containing protein 1 (708 aa).

Over residues 1–17 (MADREGGCAAGRGRELE) the composition is skewed to basic and acidic residues. A disordered region spans residues 1–57 (MADREGGCAAGRGRELEPELEPGPGPGSALEPGEEFEIVDRSQLPGPGDLRSATRPR). An RUN domain is found at 139–271 (DADHAPLQQF…LDANLCLKGE (133 aa)). Residues 321 to 374 (TVGDLQTKIDGLEKTNSKLQEELSAATDRICSLQEEQQQLREQNELIRERSEKS) adopt a coiled-coil conformation. Residues Tyr-389 and Tyr-400 each carry the phosphotyrosine modification. Positions 405 to 617 (KQLKEEKKVR…QALQEMGLHL (213 aa)) form a coiled coil. The interval 493-522 (QVMSSMKQMEERLQHSERARQGAEERSHKL) is disordered. A compositionally biased stretch (basic and acidic residues) spans 500 to 522 (QMEERLQHSERARQGAEERSHKL). The interaction with RAB4 stretch occupies residues 615–625 (LHLSQSKLKME). Phosphoserine is present on Ser-620. Residues 642 to 700 (DDEATHCRQCEKEFSISRRKHHCRNCGHIFCNTCSSNELALPSYPKPVRVCDSCHTLLL) form an FYVE-type zinc finger. The Zn(2+) site is built by Cys-648, Cys-651, Cys-664, Cys-667, Cys-672, Cys-675, Cys-692, and Cys-695.

As to quaternary structure, self-assembles through coiled coil domains to drive ELVA (endo-lysosomal vesicular assembly) formation. Interacts with BMX. May interact with SSB. Interacts with RAB4 and RAB5 that have been activated by GTP-binding. Interacts WITH RAB14 and RAB4B (GTP-bound form); the interactions allow endosomal tethering and fusion. Interacts with ARL8B (GTP-bound form); the interaction is required for RUFY1 endosomal location and promotes interaction with RAB14. In terms of processing, phosphorylation on Tyr-389 and/or Tyr-400 is required for interaction with BMX and endosomal targeting. In terms of tissue distribution, broadly expressed, with highest levels in lung, testis, kidney and brain.

It is found in the early endosome membrane. In terms of biological role, activating adapter involved in cargo sorting from early/recycling endosomes. Regulates retrieval of proteins from endosomes to the trans-Golgi network through interaction with the dynein-dynactin complex. Dual effector of RAB4B and RAB14, mediates a cooperative interaction allowing endosomal tethering and fusion. Binds phospholipid vesicles containing phosphatidylinositol 3-phosphate and participates in early endosomal trafficking. In oocytes, self-assembles to form a protein matrix which hold together endolysosomes, autophagosomes and proteasomes and generate non-membrane-bound compartments called endo-lysosomal vesicular assemblies (ELVAs). In immature oocytes, ELVAs sequester ubiquitinated protein aggregates and degrade them upon oocyte maturation. This is RUN and FYVE domain-containing protein 1 from Homo sapiens (Human).